A 227-amino-acid chain; its full sequence is N-acetyltransferase 8B (227 aa).

Residues 1–42 lie on the Cytoplasmic side of the membrane; that stretch reads MAPYHIRKYQESDRKSVVGLLSGGMAEHAPATFRRLLKLPRT. The chain crosses the membrane as a helical; Signal-anchor for type II membrane protein span at residues 43 to 63; that stretch reads LILLLGGALALLLVSGSWILA. Residues 61 to 214 enclose the N-acetyltransferase domain; it reads ILALVFSLSL…ARLVDLHTVH (154 aa). Topologically, residues 64 to 227 are lumenal; sequence LVFSLSLLPA…HLPSAQAGRL (164 aa). At K99 the chain carries N6-acetyllysine.

This sequence belongs to the NAT8 family. In terms of processing, acetylation on Lys-99 modulates enzymatic activity.

It localises to the endoplasmic reticulum-Golgi intermediate compartment membrane. Its subcellular location is the endoplasmic reticulum membrane. It catalyses the reaction L-lysyl-[protein] + acetyl-CoA = N(6)-acetyl-L-lysyl-[protein] + CoA + H(+). With respect to regulation, allosterically regulated by acetylation at residue Lys-99. In terms of biological role, endoplasmic reticulum (ER)-membrane-bound lysine N-acetyltransferase catalyzing the N6-acetylation of lysine residues in the lumen of the ER in various proteins, including PROM1 and BACE1, using acetyl-CoA as acetyl donor. Thereby, may regulate apoptosis through the acetylation and the regulation of the expression of PROM1. Acetylates and stabilizes BACE1 immature protein, leading to increased steady-state levels in neurons. By acting on BACE1 expression, may regulate amyloid beta-peptide formation. N(6)-lysine acetylation in ER maintains protein homeostasis and regulates reticulophagy. The polypeptide is N-acetyltransferase 8B (Homo sapiens (Human)).